We begin with the raw amino-acid sequence, 517 residues long: Maturase K (517 aa).

The protein belongs to the intron maturase 2 family. MatK subfamily.

The protein resides in the plastid. The protein localises to the chloroplast. In terms of biological role, usually encoded in the trnK tRNA gene intron. Probably assists in splicing its own and other chloroplast group II introns. The protein is Maturase K of Palhinhaea cernua (Nodding clubmoss).